Consider the following 626-residue polypeptide: Bifurcating [FeFe] hydrogenase beta subunit (626 aa).

Position 198–201 (198–201) interacts with NAD(+); it reads GGGG. Residues Lys-207 and 224–228 contribute to the FMN site; that span reads NGDEG. Residue Asp-229 participates in NAD(+) binding. FMN is bound by residues 312-317 and 350-352; these read FVCGEE and INN. Residues Cys-485, Cys-488, Cys-491, Cys-531, Cys-578, Cys-581, Cys-584, Cys-588, Cys-608, Cys-611, Cys-614, and Cys-618 each coordinate [4Fe-4S] cluster. 4Fe-4S ferredoxin-type domains lie at 569–598 and 599–626; these read KKYV…GERG and KPYT…IELV.

The protein belongs to the complex I 51 kDa subunit family. As to quaternary structure, heterotrimer composed of HydA (alpha subunit), HydB (beta subunit) and HydC (gamma subunit). Near neutral and acidic pH conditions favor oligomerization of the heterotrimeric holoenzyme. The cofactor is [2Fe-2S] cluster. Requires [4Fe-4S] cluster as cofactor. It depends on FMN as a cofactor.

The protein localises to the cytoplasm. It catalyses the reaction 2 H2 + 2 oxidized [2Fe-2S]-[ferredoxin] + NAD(+) = 2 reduced [2Fe-2S]-[ferredoxin] + NADH + 3 H(+). In terms of biological role, catalyzes the oxidation of the physiological electron carriers NADH and reduced ferredoxin, coupled to the production of H(2). Acts as a bifurcating [FeFe] hydrogenase, which uses the exergonic oxidation of reduced ferredoxin to drive the unfavorable oxidation of NADH to produce H(2). The beta subunit contains flavin- and NAD-binding sites and is potentially the site for NADH oxidation, with the subsequent shuttling of electrons to the alpha subunit. In Thermotoga maritima (strain ATCC 43589 / DSM 3109 / JCM 10099 / NBRC 100826 / MSB8), this protein is Bifurcating [FeFe] hydrogenase beta subunit.